Here is a 315-residue protein sequence, read N- to C-terminus: MEETTIPFKSLHSREYQGHKKKVHSVAWNSNGTKLASGSVDQTARIWNIEPHGHSKAKDLELKGHTDSVDQLCWDPKHSDLVATASGDKSVRLWDARSGKCTQQVELSGENINITYKPDGTHVAVGNRDDELTILDVRKFKPLHRRKFNYEVNEIAWNMPGDFFFLTTGLGTVEVLSYPSLKPLDTLTAHTAGCYCIAIDPKGRYFAVGSADSLVSLWDISDMLCLRTFTKLEWPVRTISFNYSGEYIASASEDLFIDIANVQTGRTVHQIPCRAAMNSVEWNPKYNLLAYAGDDKNPKYNTDEGVFRIFGFESS.

6 WD repeats span residues 18-57, 64-104, 106-145, 189-228, 231-270, and 272-311; these read GHKK…HSKA, GHTD…CTQQ, ELSG…PLHR, AHTA…CLRT, KLEW…TVHQ, and PCRA…RIFG.

It belongs to the THOC3 family. Component of the THO complex, which is composed of THO1, THO2, THO3, THO5, THO6 and THO7.

Its subcellular location is the nucleus. In terms of biological role, acts as a component of the THO subcomplex of the TREX complex which is thought to couple mRNA transcription, processing and nuclear export. Contributes to the integrity of the endogenous trans-acting small interfering RNA (ta-siRNA) pathway. May process or transport a long RNA molecule so that it can be a template for secondary siRNA production. May participate in the trafficking of siRNA precursors to the ARGONAUTE catalytic center. Required for the generation of functional messenger ribonucleoproteins (mRNPs). This chain is THO complex subunit 3 (THO3), found in Arabidopsis thaliana (Mouse-ear cress).